We begin with the raw amino-acid sequence, 598 residues long: Serine/threonine-protein kinase cot-1 (598 aa).

Composition is skewed to polar residues over residues 1–16 (MDNT…TNDT), 24–33 (TYPTTPSTFP), and 99–126 (PRTS…TQTE). Disordered regions lie at residues 1–46 (MDNT…GGSQ), 80–148 (GSAG…NQKK), and 163–190 (RARE…RESI). A Protein kinase domain is found at 214–518 (YQTIKIIGKG…AHEIKSHAFF (305 aa)). ATP contacts are provided by residues 220–228 (IGKGAFGEV) and lysine 243. The Proton acceptor role is filled by aspartate 337. The 80-residue stretch at 519–598 (RGVEFDSLRR…TFKRFDNNFR (80 aa)) folds into the AGC-kinase C-terminal domain.

The protein belongs to the protein kinase superfamily. STE Ser/Thr protein kinase family. COT1 subfamily.

It catalyses the reaction L-seryl-[protein] + ATP = O-phospho-L-seryl-[protein] + ADP + H(+). The enzyme catalyses L-threonyl-[protein] + ATP = O-phospho-L-threonyl-[protein] + ADP + H(+). Its function is as follows. Protein kinase required for hyphal elongation. The chain is Serine/threonine-protein kinase cot-1 (cot-1) from Neurospora crassa (strain ATCC 24698 / 74-OR23-1A / CBS 708.71 / DSM 1257 / FGSC 987).